A 330-amino-acid chain; its full sequence is Laforin (330 aa).

Residues 1–123 (MLFRFGVVVP…DNLVDGVYCL (123 aa)) enclose the CBM20 domain. A Phosphoserine; by AMPK modification is found at S25. Substrate-binding positions include W32, K86, 102–106 (GPHHD), D196, D234, and R240. Residues 155-322 (HYSRILPNIW…QQDFSQKFGK (168 aa)) form the Tyrosine-protein phosphatase domain. The Phosphocysteine intermediate role is filled by C265. The Glucan phosphatase signature motif CXAGXGR motif lies at 265–271 (CNAGVGR). Substrate-binding positions include 266 to 271 (NAGVGR) and Y303.

Belongs to the protein-tyrosine phosphatase family. Homodimer. Interacts with PPP1R3B, PPP1R3C, HIRIP5, and EPM2AIP1. Binds glycogen and Lafora bodies. Interacts with NHLRC1/malin (via the NHL repeats). Forms a complex with NHLRC1/malin and HSP70. Interacts with PPP1R3D; in the presence of NHLC1/malin the interaction leads to ubiquitination and autophagic degradation of PPP1R3D. Interacts (via the phosphatase domain) with MAPT/Tau; the interaction dephosphorylates MAPT. Interacts with PRDM8. Polyubiquitinated by NHLRC1/malin. In terms of processing, phosphorylation on Ser-25 by AMPK affects the phosphatase activity of the enzyme and its ability to homodimerize and interact with NHLRC1, PPP1R3C or PRKAA2. Detected in skeletal muscle and in brain (at protein level). Widely expressed. Higher levels of expression are found in heart, brain, liver, skeletal muscle and kidney.

It localises to the cytoplasm. Its subcellular location is the endoplasmic reticulum membrane. The protein localises to the cell membrane. The catalysed reaction is O-phospho-L-tyrosyl-[protein] + H2O = L-tyrosyl-[protein] + phosphate. It carries out the reaction O-phospho-L-seryl-[protein] + H2O = L-seryl-[protein] + phosphate. The enzyme catalyses O-phospho-L-threonyl-[protein] + H2O = L-threonyl-[protein] + phosphate. Plays an important role in preventing glycogen hyperphosphorylation and the formation of insoluble aggregates, via its activity as glycogen phosphatase, and by promoting the ubiquitination of proteins involved in glycogen metabolism via its interaction with the E3 ubiquitin ligase NHLRC1/malin. Dephosphorylates phosphotyrosine and synthetic substrates, such as para-nitrophenylphosphate (pNPP), and has low activity with phosphoserine and phosphothreonine substrates (in vitro). Has also been shown to dephosphorylate MAPT. Shows strong phosphatase activity towards complex carbohydrates in vitro, avoiding glycogen hyperphosphorylation which is associated with reduced branching and formation of insoluble aggregates. Forms a complex with NHLRC1/malin and HSP70, which suppresses the cellular toxicity of misfolded proteins by promoting their degradation through the ubiquitin-proteasome system (UPS). Acts as a scaffold protein to facilitate PPP1R3C/PTG ubiquitination by NHLRC1/malin. Also promotes proteasome-independent protein degradation through the macroautophagy pathway. The polypeptide is Laforin (Epm2a) (Mus musculus (Mouse)).